The following is a 389-amino-acid chain: Serpentine receptor class alpha/beta-14 (389 aa).

Residues 1 to 45 are Extracellular-facing; the sequence is MPSDDFVKTARKALISHSVSIQNYTEDDCQIAFHATTNSFMQTIR. N-linked (GlcNAc...) asparagine glycosylation is present at Asn23. A helical transmembrane segment spans residues 46–66; that stretch reads LVHIFFCTFGAISSSLFIYVL. Residues 67–81 lie on the Cytoplasmic side of the membrane; sequence LNSSSRNLHRNLRIS. The helical transmembrane segment at 82–102 threads the bilayer; that stretch reads LASLAFAALIACLQLDFIAFY. The Extracellular portion of the chain corresponds to 103 to 123; it reads HLALTLTADNACDSMYEARKC. A disulfide bond links Cys123 and Cys198. The helical transmembrane segment at 124–144 threads the bilayer; sequence AILRFPVVLSIYATLCGIIVL. Residues 145-167 are Cytoplasmic-facing; it reads AIERTIATLKYKTYEANGSRVVG. Residues 168–188 form a helical membrane-spanning segment; the sequence is LVLVTGQWFVCIIVAVFSVLL. The Extracellular segment spans residues 189 to 208; it reads RSDPGYVHYCTAYVSHPRTS. The chain crosses the membrane as a helical span at residues 209–229; sequence VFSLCFMSALEVATLVYFVLL. The Cytoplasmic segment spans residues 230-268; the sequence is LQSNQRRQVNEFVNKAMHSLSERYQLQENVRIMKILIPS. Residues 269–289 form a helical membrane-spanning segment; the sequence is ITVHAILGFIGLGSMLAFAII. At 290 to 303 the chain is on the extracellular side; sequence YRYADERLIVGFAP. The helical transmembrane segment at 304-324 threads the bilayer; that stretch reads FSEVVLLVIPIYAVVFPIVAV. Residues 325-389 are Cytoplasmic-facing; the sequence is VQNKQLRLAS…FDLLNEMWKK (65 aa).

This sequence belongs to the nematode receptor-like protein srab family.

The protein localises to the membrane. The polypeptide is Serpentine receptor class alpha/beta-14 (Caenorhabditis elegans).